The sequence spans 472 residues: Ribulose bisphosphate carboxylase large chain (472 aa).

Substrate contacts are provided by N116 and T166. The Proton acceptor role is filled by K168. A substrate-binding site is contributed by K170. K194, D196, and E197 together coordinate Mg(2+). K194 carries the post-translational modification N6-carboxylysine. H287 (proton acceptor) is an active-site residue. Residues R288, H320, and S372 each contribute to the substrate site.

This sequence belongs to the RuBisCO large chain family. Type I subfamily. In terms of assembly, heterohexadecamer of 8 large chains and 8 small chains. Requires Mg(2+) as cofactor.

The catalysed reaction is 2 (2R)-3-phosphoglycerate + 2 H(+) = D-ribulose 1,5-bisphosphate + CO2 + H2O. It catalyses the reaction D-ribulose 1,5-bisphosphate + O2 = 2-phosphoglycolate + (2R)-3-phosphoglycerate + 2 H(+). RuBisCO catalyzes two reactions: the carboxylation of D-ribulose 1,5-bisphosphate, the primary event in carbon dioxide fixation, as well as the oxidative fragmentation of the pentose substrate. Both reactions occur simultaneously and in competition at the same active site. The polypeptide is Ribulose bisphosphate carboxylase large chain (Nitrobacter vulgaris).